Consider the following 284-residue polypeptide: Tetraspanin-10 (284 aa).

Topologically, residues 1-11 (MGMGTSTFVIR) are cytoplasmic. A helical membrane pass occupies residues 12–32 (WVNLLTMLLAVAVIIFGVWMS). The Extracellular portion of the chain corresponds to 33-43 (THNDGCRRSLT). The chain crosses the membrane as a helical span at residues 44–64 (FPVIALGGFIFLISIIGFLGA). Topologically, residues 65-75 (CKRSVALLWIY) are cytoplasmic. The chain crosses the membrane as a helical span at residues 76-96 (LAVLLIVLIAILVFTVLAFIV). The Extracellular portion of the chain corresponds to 97–228 (TNNGSGHTNP…AGVAQYMKTE (132 aa)). 3 N-linked (GlcNAc...) asparagine glycosylation sites follow: Asn99, Asn128, and Asn183. A helical transmembrane segment spans residues 229–249 (WRLVAIFNVVLFVVLISSLLS). The Cytoplasmic segment spans residues 250 to 284 (TRFDSEQSFGLLNGLVQISNITFKDCQTTTVPKQF).

The protein belongs to the tetraspanin (TM4SF) family.

It localises to the membrane. In terms of biological role, may be involved in the regulation of cell differentiation. This is Tetraspanin-10 (TET10) from Arabidopsis thaliana (Mouse-ear cress).